The primary structure comprises 185 residues: uncharacterized protein (185 aa).

The N-terminal stretch at 1–29 is a signal peptide; the sequence is MKNQEIIEVKSKMFLRIWAFVGSAGMGLA. Cysteine 30 carries the N-palmitoyl cysteine lipid modification. The S-diacylglycerol cysteine moiety is linked to residue cysteine 30. A helical transmembrane segment spans residues 45–67; it reads YLLAIPAGFLFTLFCLYLFIIFF.

The protein to B.subtilis YfjE.

The protein resides in the cell membrane. This is an uncharacterized protein from Bacillus subtilis (strain 168).